The following is a 186-amino-acid chain: High mobility group protein B4 (186 aa).

DNA-binding regions (HMG box) lie at residues 9 to 79 (PKAN…MNYV) and 93 to 161 (PRRP…ELYR). Residues 77-98 (NYVGKRKKRRKRDPQEPRRPPS) form a disordered region.

It belongs to the HMGB family.

Its subcellular location is the nucleus. It localises to the chromosome. The protein is High mobility group protein B4 (HMGB4) of Homo sapiens (Human).